The sequence spans 139 residues: AP-4 complex subunit sigma (139 aa).

It belongs to the adaptor complexes small subunit family. As to quaternary structure, may be part of the adaptor protein complex 4 (AP-4), a heterotetramer composed of two large adaptins (epsilon-type subunitand beta-type subunit), a medium adaptin (mu-type subunit) and a small adaptin (sigma-type).

It is found in the golgi apparatus. It localises to the trans-Golgi network membrane. Functionally, probable component of an adaptor protein complex. Adaptor protein complexes are vesicle coat components involved both in vesicle formation and cargo selection. They control the vesicular transport of proteins in different trafficking pathways. This is AP-4 complex subunit sigma from Dictyostelium discoideum (Social amoeba).